Consider the following 284-residue polypeptide: MKLVIVSGRSGSGKSVALRVLEDLGYYCVDNLPLPLIGSLLEQLKGSNDLVAISVDVRNLPEQDKVLVKQLASLPEGTELTSFFLNSSDKVLLKRYSETRRLHPLSKSRVSLQEAIKLEGKLLEPLSQQMDHYIDTSNLNIYELSDQVRQILLGSVDKELVINFESFGFKHGMPTEADFMFDVRFLPNPHWEPELRPLTGLDEPVAEFLNRQPLVNKFIWQIENLLETWLPHLERNNRSYLTIAIGCTGGQHRSVYVAEQLAKRFSNGKHKVNARHRELNHAKA.

ATP is bound at residue 8 to 15 (GRSGSGKS). 56–59 (DVRN) contributes to the GTP binding site.

This sequence belongs to the RapZ-like family.

Displays ATPase and GTPase activities. This chain is Nucleotide-binding protein Shewmr7_3352, found in Shewanella sp. (strain MR-7).